The sequence spans 168 residues: Small ribosomal subunit protein uS5 (168 aa).

Residues 13-76 enclose the S5 DRBM domain; the sequence is IQEKLVAVRR…ENARRNMISV (64 aa).

The protein belongs to the universal ribosomal protein uS5 family. As to quaternary structure, part of the 30S ribosomal subunit. Contacts proteins S4 and S8.

With S4 and S12 plays an important role in translational accuracy. Functionally, located at the back of the 30S subunit body where it stabilizes the conformation of the head with respect to the body. The protein is Small ribosomal subunit protein uS5 of Coxiella burnetii (strain RSA 493 / Nine Mile phase I).